Reading from the N-terminus, the 217-residue chain is MAPGSRTSLLLAFGLLCLPWLQEGSAFPTIPLSRLFDNAMLRAHRLHQLAFDTYQEFEEAYIPKEQKYSFLQNPQTSLCFSESIPTPSNREETQQKSNLELLRISLLLIQSWLEPVQFLRSVFANSLVYGASDSNVYDLLKDLEEGIQTLMGRLEDGSPRTGQIFKQTYSKFDTNSHNDDALLKNYGLLYCFRKDMDKVETFLRIVQCRSVEGSCGF.

The signal sequence occupies residues 1-26 (MAPGSRTSLLLAFGLLCLPWLQEGSA). Histidine 44 contributes to the Zn(2+) binding site. Cysteine 79 and cysteine 191 are oxidised to a cystine. Serine 132 bears the Phosphoserine mark. Glutamate 200 lines the Zn(2+) pocket. Cysteine 208 and cysteine 215 are disulfide-bonded.

This sequence belongs to the somatotropin/prolactin family.

It is found in the secreted. Plays an important role in growth control. Its major role in stimulating body growth is to stimulate the liver and other tissues to secrete IGF1. It stimulates both the differentiation and proliferation of myoblasts. It also stimulates amino acid uptake and protein synthesis in muscle and other tissues. This Pan troglodytes (Chimpanzee) protein is Somatotropin (GH1).